Here is a 572-residue protein sequence, read N- to C-terminus: Acyl-coenzyme A synthetase ACSM2, mitochondrial (572 aa).

Residues 1–46 constitute a mitochondrion transit peptide; it reads MHWLWKIPRLCTFWGTEMFHRTFHMNIKKLMPIQWGHQEVPAKFNF. Q139 contributes to the CoA binding site. ATP-binding positions include 221 to 229, 359 to 364, D446, and R461; these read TSGTSGPPK and EIYGQT. Residue T364 coordinates substrate. 469–471 contributes to the CoA binding site; the sequence is SGY. A substrate-binding site is contributed by R472. Residues R501, K532, and 540 to 542 contribute to the CoA site; that span reads YPR. K557 serves as a coordination point for ATP.

It belongs to the ATP-dependent AMP-binding enzyme family. As to quaternary structure, monomer. The cofactor is Mg(2+). Mn(2+) serves as cofactor. Detected in kidney, in proximal tubules.

It is found in the mitochondrion. The catalysed reaction is a medium-chain fatty acid + ATP + CoA = a medium-chain fatty acyl-CoA + AMP + diphosphate. The enzyme catalyses benzoate + ATP + CoA = benzoyl-CoA + AMP + diphosphate. It catalyses the reaction hexanoate + ATP + CoA = hexanoyl-CoA + AMP + diphosphate. It carries out the reaction butanoate + ATP + CoA = butanoyl-CoA + AMP + diphosphate. The catalysed reaction is octanoate + ATP + CoA = octanoyl-CoA + AMP + diphosphate. The enzyme catalyses decanoate + ATP + CoA = decanoyl-CoA + AMP + diphosphate. Functionally, catalyzes the activation of fatty acids by CoA to produce an acyl-CoA, the first step in fatty acid metabolism. Capable of activating medium-chain fatty acids (e.g. butyric (C4) to decanoic (C10) acids), and certain carboxylate-containing xenobiotics, e.g. benzoate. The polypeptide is Acyl-coenzyme A synthetase ACSM2, mitochondrial (Acsm2) (Rattus norvegicus (Rat)).